Consider the following 332-residue polypeptide: Glycine betaine-binding periplasmic protein OusX (332 aa).

Positions 1–21 (MRNISMATLALTTVLSTGLFA) are cleaved as a signal peptide.

In terms of assembly, the complex is composed of two ATP-binding proteins (OusV), two transmembrane proteins (OusW) and a solute-binding protein (OusX).

The protein resides in the periplasm. Its function is as follows. Part of the OusB ABC transporter complex involved in glycine betaine and choline uptake. Binds glycine betaine. The polypeptide is Glycine betaine-binding periplasmic protein OusX (Dickeya dadantii (strain 3937) (Erwinia chrysanthemi (strain 3937))).